We begin with the raw amino-acid sequence, 601 residues long: Sulfite reductase [NADPH] flavoprotein alpha-component (601 aa).

The Flavodoxin-like domain maps to 64–202 (ITLISASQTG…SAQQWRQQIV (139 aa)). FMN-binding positions include 70 to 75 (SQTGNA), 117 to 120 (STQG), and 153 to 162 (LGDTSYEHFC). The 215-residue stretch at 236–450 (AAPLTAQLSV…IEHNDNFRLP (215 aa)) folds into the FAD-binding FR-type domain. Residues Thr-324, Lys-358, 388–391 (RLYS), 406–408 (TVG), Tyr-412, and 421–424 (GGAS) contribute to the FAD site. Residues 521–522 (SR), 527–531 (KIYVQ), and Asp-563 each bind NADP(+). Tyr-601 serves as a coordination point for FAD.

This sequence belongs to the NADPH-dependent sulphite reductase flavoprotein subunit CysJ family. It in the N-terminal section; belongs to the flavodoxin family. The protein in the C-terminal section; belongs to the flavoprotein pyridine nucleotide cytochrome reductase family. In terms of assembly, alpha(8)-beta(8). The alpha component is a flavoprotein, the beta component is a hemoprotein. Requires FAD as cofactor. It depends on FMN as a cofactor.

The enzyme catalyses hydrogen sulfide + 3 NADP(+) + 3 H2O = sulfite + 3 NADPH + 4 H(+). Its pathway is sulfur metabolism; hydrogen sulfide biosynthesis; hydrogen sulfide from sulfite (NADPH route): step 1/1. Its function is as follows. Component of the sulfite reductase complex that catalyzes the 6-electron reduction of sulfite to sulfide. This is one of several activities required for the biosynthesis of L-cysteine from sulfate. The flavoprotein component catalyzes the electron flow from NADPH -&gt; FAD -&gt; FMN to the hemoprotein component. The chain is Sulfite reductase [NADPH] flavoprotein alpha-component from Yersinia enterocolitica serotype O:8 / biotype 1B (strain NCTC 13174 / 8081).